The primary structure comprises 267 residues: MTAIPTPYEDLLRTIRDEGAHKDDRTGTGTTSLFGQQIRYNLQEGFPLLTTKKVHFHSVVGELLWFLRGDSNVRWLQDNNIRIWNEWADEDGELGPVYGVQWRSWPTPDGRHIDQISRALEMLKNNPDSRRNIVSAWNVSELENMALPPCHLLFQLYVADGKLSCQLYQRSADMFLGVPFNIASYALLTHMFAQQADLEVGEFIWTGGDCHIYDNHTEQVDEQLSRAARPYPTLELNKAASLFDYTFEDIAVSNYDPHPLIRGKVAV.

Residue Arg-25 participates in dUMP binding. Residue His-55 participates in (6R)-5,10-methylene-5,6,7,8-tetrahydrofolate binding. DUMP is bound at residue 130–131; the sequence is RR. Cys-150 (nucleophile) is an active-site residue. Residues 170-173, Asn-181, and 211-213 each bind dUMP; these read RSAD and HIY. Position 173 (Asp-173) interacts with (6R)-5,10-methylene-5,6,7,8-tetrahydrofolate. Ala-266 serves as a coordination point for (6R)-5,10-methylene-5,6,7,8-tetrahydrofolate.

This sequence belongs to the thymidylate synthase family. Bacterial-type ThyA subfamily. As to quaternary structure, homodimer.

It is found in the cytoplasm. It catalyses the reaction dUMP + (6R)-5,10-methylene-5,6,7,8-tetrahydrofolate = 7,8-dihydrofolate + dTMP. It participates in pyrimidine metabolism; dTTP biosynthesis. In terms of biological role, catalyzes the reductive methylation of 2'-deoxyuridine-5'-monophosphate (dUMP) to 2'-deoxythymidine-5'-monophosphate (dTMP) while utilizing 5,10-methylenetetrahydrofolate (mTHF) as the methyl donor and reductant in the reaction, yielding dihydrofolate (DHF) as a by-product. This enzymatic reaction provides an intracellular de novo source of dTMP, an essential precursor for DNA biosynthesis. The protein is Thymidylate synthase of Corynebacterium efficiens (strain DSM 44549 / YS-314 / AJ 12310 / JCM 11189 / NBRC 100395).